Here is a 252-residue protein sequence, read N- to C-terminus: MLSVKSIPAFNDNYIWLIHNNDNHCVVVDPGDATPVLECIKEHDFILDAILITHHHHDHIGGVPELVRQFPNVNVVGPENEPIPTLTHPVGDGDFVELFDEQFMVLGVPGHTNGHVAYIGDEKLFCGDALFSAGCGRLFEGTAEQMFNSLQKMAALPDETEVYCAHEYTASNLAFALAVEPDNDYLLRYREKVLHLRAHGKSTIPSTLQREKLINPFLRTSEANVKKSVASKVQDSTEVEIFTALRRWKDEF.

Residues H54, H56, D58, H59, H111, D128, and H166 each contribute to the Zn(2+) site.

This sequence belongs to the metallo-beta-lactamase superfamily. Glyoxalase II family. As to quaternary structure, monomer. Requires Zn(2+) as cofactor.

The enzyme catalyses an S-(2-hydroxyacyl)glutathione + H2O = a 2-hydroxy carboxylate + glutathione + H(+). It participates in secondary metabolite metabolism; methylglyoxal degradation; (R)-lactate from methylglyoxal: step 2/2. Its function is as follows. Thiolesterase that catalyzes the hydrolysis of S-D-lactoyl-glutathione to form glutathione and D-lactic acid. This is Hydroxyacylglutathione hydrolase from Aliivibrio fischeri (strain ATCC 700601 / ES114) (Vibrio fischeri).